We begin with the raw amino-acid sequence, 281 residues long: Streptomycin biosynthesis protein StrF (281 aa).

Its pathway is antibiotic biosynthesis; streptomycin biosynthesis. Functionally, may be involved in the formation of N-methyl-L-glucosamine. The polypeptide is Streptomycin biosynthesis protein StrF (strF) (Streptomyces griseus).